Here is a 418-residue protein sequence, read N- to C-terminus: Serine hydroxymethyltransferase (418 aa).

Residues Leu-121 and 125–127 (GHL) contribute to the (6S)-5,6,7,8-tetrahydrofolate site. Position 230 is an N6-(pyridoxal phosphate)lysine (Lys-230). 355–357 (SPF) serves as a coordination point for (6S)-5,6,7,8-tetrahydrofolate.

It belongs to the SHMT family. In terms of assembly, homodimer. Pyridoxal 5'-phosphate is required as a cofactor.

It is found in the cytoplasm. The enzyme catalyses (6R)-5,10-methylene-5,6,7,8-tetrahydrofolate + glycine + H2O = (6S)-5,6,7,8-tetrahydrofolate + L-serine. It participates in one-carbon metabolism; tetrahydrofolate interconversion. The protein operates within amino-acid biosynthesis; glycine biosynthesis; glycine from L-serine: step 1/1. Its function is as follows. Catalyzes the reversible interconversion of serine and glycine with tetrahydrofolate (THF) serving as the one-carbon carrier. This reaction serves as the major source of one-carbon groups required for the biosynthesis of purines, thymidylate, methionine, and other important biomolecules. Also exhibits THF-independent aldolase activity toward beta-hydroxyamino acids, producing glycine and aldehydes, via a retro-aldol mechanism. The chain is Serine hydroxymethyltransferase from Streptococcus pyogenes serotype M6 (strain ATCC BAA-946 / MGAS10394).